The primary structure comprises 358 residues: Histidinol-phosphate aminotransferase (358 aa).

N6-(pyridoxal phosphate)lysine is present on Lys-221.

It belongs to the class-II pyridoxal-phosphate-dependent aminotransferase family. Histidinol-phosphate aminotransferase subfamily. Homodimer. The cofactor is pyridoxal 5'-phosphate.

It catalyses the reaction L-histidinol phosphate + 2-oxoglutarate = 3-(imidazol-4-yl)-2-oxopropyl phosphate + L-glutamate. It functions in the pathway amino-acid biosynthesis; L-histidine biosynthesis; L-histidine from 5-phospho-alpha-D-ribose 1-diphosphate: step 7/9. This is Histidinol-phosphate aminotransferase from Caldicellulosiruptor saccharolyticus (strain ATCC 43494 / DSM 8903 / Tp8T 6331).